The primary structure comprises 448 residues: Argininosuccinate synthase (448 aa).

Residues 17 to 25 and Ala-43 contribute to the ATP site; that span reads AFSGGLDTS. Tyr-99 serves as a coordination point for L-citrulline. ATP is bound by residues Gly-129 and Thr-131. L-aspartate contacts are provided by Thr-131, Asn-135, and Asp-136. Asn-135 lines the L-citrulline pocket. ATP is bound at residue Asp-136. The L-citrulline site is built by Arg-139 and Ser-192. Asp-194 lines the ATP pocket. L-citrulline-binding residues include Thr-201, Glu-203, and Glu-280.

It belongs to the argininosuccinate synthase family. Type 2 subfamily. In terms of assembly, homotetramer.

Its subcellular location is the cytoplasm. The enzyme catalyses L-citrulline + L-aspartate + ATP = 2-(N(omega)-L-arginino)succinate + AMP + diphosphate + H(+). It functions in the pathway amino-acid biosynthesis; L-arginine biosynthesis; L-arginine from L-ornithine and carbamoyl phosphate: step 2/3. In Enterobacter sp. (strain 638), this protein is Argininosuccinate synthase.